Consider the following 185-residue polypeptide: ATP-dependent protease subunit HslV (185 aa).

T2 is an active-site residue. 3 residues coordinate Na(+): G157, C160, and T163.

The protein belongs to the peptidase T1B family. HslV subfamily. A double ring-shaped homohexamer of HslV is capped on each side by a ring-shaped HslU homohexamer. The assembly of the HslU/HslV complex is dependent on binding of ATP.

The protein resides in the cytoplasm. It catalyses the reaction ATP-dependent cleavage of peptide bonds with broad specificity.. With respect to regulation, allosterically activated by HslU binding. In terms of biological role, protease subunit of a proteasome-like degradation complex believed to be a general protein degrading machinery. This chain is ATP-dependent protease subunit HslV, found in Idiomarina loihiensis (strain ATCC BAA-735 / DSM 15497 / L2-TR).